Here is a 47-residue protein sequence, read N- to C-terminus: PhoP/PhoQ regulator MgrB (47 aa).

A helical transmembrane segment spans residues 6–26 (WVALVVVVLACLLLWAQVFNM).

The protein belongs to the MgrB family. May form homooligomers. Probably interacts with the periplasmic domain of PhoQ.

Its subcellular location is the cell inner membrane. Functionally, phoP-regulated transcription is redox-sensitive, being activated when the periplasm becomes more reducing. MgrB acts between DsbA/DsbB and PhoP/PhoQ in this pathway. Represses PhoP/PhoQ signaling, possibly by binding to the periplasmic domain of PhoQ, altering its activity and that of downstream effector PhoP. The polypeptide is PhoP/PhoQ regulator MgrB (Escherichia coli O1:K1 / APEC).